The primary structure comprises 474 residues: Protein U79/U80 (474 aa).

2 stretches are compositionally biased toward basic and acidic residues: residues 156–165 (DRKKHDDEHR) and 175–219 (RKVE…KRQK). Disordered regions lie at residues 156-219 (DRKK…KRQK) and 412-441 (SGQNRGRARGRGRGRAPRRRNSNINNSRTQ). Residues 417 to 432 (GRARGRGRGRAPRRRN) show a composition bias toward basic residues.

It belongs to the herpesviridae U79/UL112 family.

The protein localises to the host nucleus. Its function is as follows. May be involved in DNA replication. This is Protein U79/U80 (U79/U80) from Homo sapiens (Human).